A 202-amino-acid chain; its full sequence is Inner membrane-spanning protein YciB (202 aa).

The next 5 membrane-spanning stretches (helical) occupy residues 47–67, 75–95, 101–121, 146–166, and 174–194; these read ILLA…WVHF, MLWV…AFQN, WKPT…AFIL, LSWI…AFNF, and FKLF…GMLL.

The protein belongs to the YciB family.

The protein localises to the cell inner membrane. Its function is as follows. Plays a role in cell envelope biogenesis, maintenance of cell envelope integrity and membrane homeostasis. This Dechloromonas aromatica (strain RCB) protein is Inner membrane-spanning protein YciB.